The chain runs to 234 residues: Ubiquitin domain-containing protein 2 (234 aa).

Positions 1 to 46 (MGGCVGAQHDSSGSLNENSEGTGVALGRNQPLKKEKPKWKSDYPMT) are disordered. Residues 9–21 (HDSSGSLNENSEG) are compositionally biased toward polar residues. Basic and acidic residues predominate over residues 32–41 (LKKEKPKWKS). Positions 152–227 (SQLRLRLSTG…VQVIMSQPLQ (76 aa)) constitute a Ubiquitin-like domain.

Its subcellular location is the cytoplasm. This Bos taurus (Bovine) protein is Ubiquitin domain-containing protein 2 (UBTD2).